The sequence spans 99 residues: Apolipoprotein C-III (99 aa).

The N-terminal stretch at 1 to 20 (MQPRTLLTVALLALLASARA) is a signal peptide. Residue methionine 63 is modified to Methionine sulfoxide. The lipid-binding stretch occupies residues 68-99 (RFLKGYWSKFTDKFTGFWDSNPEDQPTPAIES). Threonine 94 carries O-linked (GalNAc...) threonine glycosylation.

Belongs to the apolipoprotein C3 family. The most abundant glycoforms are characterized by an O-linked disaccharide galactose linked to N-acetylgalactosamine (Gal-GalNAc), further modified with up to 3 sialic acid residues. Less abundant glycoforms are characterized by more complex and fucosylated glycan moieties. O-glycosylated on Thr-94 with a core 1 or possibly core 8 glycan.

The protein localises to the secreted. Its function is as follows. Component of triglyceride-rich very low density lipoproteins (VLDL) and high density lipoproteins (HDL) in plasma. Plays a multifaceted role in triglyceride homeostasis. Intracellularly, promotes hepatic very low density lipoprotein 1 (VLDL1) assembly and secretion; extracellularly, attenuates hydrolysis and clearance of triglyceride-rich lipoproteins (TRLs). Impairs the lipolysis of TRLs by inhibiting lipoprotein lipase and the hepatic uptake of TRLs by remnant receptors. Formed of several curved helices connected via semiflexible hinges, so that it can wrap tightly around the curved micelle surface and easily adapt to the different diameters of its natural binding partners. This is Apolipoprotein C-III (Apoc3) from Mus musculus (Mouse).